The sequence spans 1046 residues: Arrestin-related trafficking adapter 3 (1046 aa).

The tract at residues 115–141 (YPPTEQKSKKKMDASAPNESNNAANNF) is disordered. Residues 128-140 (ASAPNESNNAANN) show a composition bias toward low complexity. Serine 155 and serine 162 each carry phosphoserine. 2 stretches are compositionally biased toward low complexity: residues 168-179 (SGLSSLNLSPLG) and 198-210 (RSSSVTSSNGPSR). The disordered stretch occupies residues 168–230 (SGLSSLNLSP…ATSPSVSHHN (63 aa)). Serine 213 and serine 586 each carry phosphoserine. Over residues 605–614 (TRNSRQFNRN) the composition is skewed to polar residues. 2 disordered regions span residues 605 to 627 (TRNSRQFNRNSKSHPSDNTIFNS) and 651 to 820 (PLSP…FAHS). Positions 669 to 694 (FDFSSDFISDAASGTTTTEVSSSESS) are enriched in low complexity. Residues 734–785 (KNSDKNSSETLNKKESMSKIEENKHKRETTPKKRENRDVKSLSTPQREESKD) are compositionally biased toward basic and acidic residues. Positions 802 to 811 (LSLSSSLHSS) are enriched in low complexity. 2 positions are modified to phosphoserine: serine 826 and serine 838. The tract at residues 868–889 (NHDKNELNRHSTNTSSTPASAR) is disordered. A compositionally biased stretch (polar residues) spans 877–889 (HSTNTSSTPASAR). Serine 900 bears the Phosphoserine mark. Residues 986-1017 (QNSAESDHNNDIFTQGSGLTESSKNSDSEERF) are disordered. The segment covering 996-1008 (DIFTQGSGLTESS) has biased composition (polar residues). A phosphoserine mark is found at serine 1022 and serine 1023.

Belongs to the ALY1 family. Interacts with PCL6, PCL7 and RSP5. In terms of processing, ubiquitinated by RSP5. Phosphorylated by the cyclin-CDKs PCL6-PHO85 and PCL7-PHO85.

It localises to the cytoplasm. In terms of biological role, may regulate endocytosis by recruiting RSP5 ubiquitin ligase activity to specific plasma membrane proteins in response to extracellular stimuli. The protein is Arrestin-related trafficking adapter 3 (ALY2) of Saccharomyces cerevisiae (strain ATCC 204508 / S288c) (Baker's yeast).